Consider the following 737-residue polypeptide: Aryl hydrocarbon receptor nuclear translocator 2 (737 aa).

Residues 1 to 73 (MATPAAVNPS…SRYDDDQIPG (73 aa)) form a disordered region. Residues 64-73 (SRYDDDQIPG) are compositionally biased toward basic and acidic residues. Residues 78-131 (YARENHSEIERRRRNKMTQYITELSDMVPTCSALARKPDKLTILRMAVSHMKSM) form the bHLH domain. 2 PAS domains span residues 149–221 (TEQE…ENSM) and 340–406 (SMDM…QVVK). The PAC domain occupies 413–456 (SVMYRFRMKNREWMLIRTSSFTFQNPYSDEIEYIICTNTNVKQL). Disordered regions lie at residues 525 to 556 (MMVPSSTSGGQQLYSQGSPFQPGHSGKSFSSS) and 588 to 721 (QVSW…TTNY). 2 stretches are compositionally biased toward polar residues: residues 528–543 (PSSTSGGQQLYSQGSP) and 588–626 (QVSWSGNRPPFSGQQIPAQSNKAQSSPFGIGSSHSYQAD). Positions 627 to 642 (PSSYSPLSSPATSSPS) are enriched in low complexity. Over residues 643–656 (GNAYSNLANRNTAF) the composition is skewed to polar residues. The segment covering 659-688 (SGESSQSGGQFQGRPSEVWSQWQSQHHSQQ) has biased composition (low complexity).

In terms of assembly, efficient DNA binding requires dimerization with another bHLH protein. Heterodimer with the aryl hydrocarbon receptor (AHR), SIM1 or HIF2A/EPAS-1. As to expression, isoform 1 and isoform 2 are most highly expressed in the brain, eye and skeletal muscle and to a lower degree in liver, heart, kidney and swim bladder. Isoform 3 is most highly expressed in the eye, forebrain, midbrain, hindbrain, skeletal muscle, gills and brain but is barely detectable in liver, heart, kidney and swim bladder. Before the pharyngula period isoform 3 is expressed throughout the entire embryo and during this period extensively in the brain and eye.

It localises to the nucleus. In terms of biological role, transcription factor that plays a role in the development of the hypothalamo-pituitary axis. Specifically recognizes the xenobiotic response element (XRE). Isoform 1 acts as a transcriptional activator. Isoform 3 acts as a transcriptional repressor. This chain is Aryl hydrocarbon receptor nuclear translocator 2, found in Danio rerio (Zebrafish).